A 200-amino-acid chain; its full sequence is Casparian strip membrane protein 1 (200 aa).

Residues M1 to G38 lie on the Cytoplasmic side of the membrane. A helical membrane pass occupies residues L39 to A59. Over T60–T86 the chain is Extracellular. The chain crosses the membrane as a helical span at residues F87 to F107. The Cytoplasmic portion of the chain corresponds to S108–R121. The chain crosses the membrane as a helical span at residues L122–A142. Topologically, residues A143–E171 are extracellular. The chain crosses the membrane as a helical span at residues V172 to L192. The Cytoplasmic segment spans residues S193–H200.

It belongs to the Casparian strip membrane proteins (CASP) family. Homodimer and heterodimers.

Its subcellular location is the cell membrane. Regulates membrane-cell wall junctions and localized cell wall deposition. Required for establishment of the Casparian strip membrane domain (CSD) and the subsequent formation of Casparian strips, a cell wall modification of the root endodermis that determines an apoplastic barrier between the intraorganismal apoplasm and the extraorganismal apoplasm and prevents lateral diffusion. The chain is Casparian strip membrane protein 1 from Theobroma cacao (Cacao).